The following is a 241-amino-acid chain: MNIDKIFENPSNLRSFEFNNDVCKVFDDMVSRSVPGYHNIQDIISLTYDEFSQNRVFIDVGCSTGTTIAKILSENQVNYCYGIDISESMLAIAQEKCGEHESLVTFKNCNLLNGTDNVINSEKVPDFIILNLVLQFIRPPERKKFITNIKSLCSSSTLMLVFEKIIFNDAEINMKYIDSYLKWKGKNGYSESEVSNKRKALENKLIPYLHEENIELFKSSGFNSVEICFSFLNFRGYLCRC.

Residues tyrosine 37, 61–63 (GCS), asparagine 131, and arginine 198 each bind S-adenosyl-L-methionine.

Belongs to the class I-like SAM-binding methyltransferase superfamily. Cx-SAM synthase family. As to quaternary structure, homodimer.

The catalysed reaction is prephenate + S-adenosyl-L-methionine = carboxy-S-adenosyl-L-methionine + 3-phenylpyruvate + H2O. Its function is as follows. Catalyzes the conversion of S-adenosyl-L-methionine (SAM) to carboxy-S-adenosyl-L-methionine (Cx-SAM). This Yersinia pseudotuberculosis serotype IB (strain PB1/+) protein is Carboxy-S-adenosyl-L-methionine synthase 1.